The following is a 68-amino-acid chain: Small ribosomal subunit protein bS18c (68 aa).

This sequence belongs to the bacterial ribosomal protein bS18 family. Part of the 30S ribosomal subunit.

Its subcellular location is the plastid. It localises to the chloroplast. This is Small ribosomal subunit protein bS18c (rps18) from Cyanidium caldarium (Red alga).